The following is a 145-amino-acid chain: MLNISHYKIIAIGKIKKKWIQEGIEMYLKRLPGLEVKEIKDSTQLKEEHTIKEIISKNEFLVTLNENGQSFTSKQLATKLLNSHNQNITFVIGGASGLSSSLNNLASWQLSLSPLTFPHEIARLLLIEQLYRAKAITQGGPYHKE.

S-adenosyl-L-methionine-binding positions include Leu64, Gly93, and 112-117 (LSPLTF).

It belongs to the RNA methyltransferase RlmH family. Homodimer.

The protein localises to the cytoplasm. The catalysed reaction is pseudouridine(1915) in 23S rRNA + S-adenosyl-L-methionine = N(3)-methylpseudouridine(1915) in 23S rRNA + S-adenosyl-L-homocysteine + H(+). Functionally, specifically methylates the pseudouridine at position 1915 (m3Psi1915) in 23S rRNA. This chain is Ribosomal RNA large subunit methyltransferase H, found in Prochlorococcus marinus (strain NATL2A).